Here is a 341-residue protein sequence, read N- to C-terminus: Ferrochelatase (341 aa).

Positions 189 and 293 each coordinate Fe cation.

It belongs to the ferrochelatase family.

It is found in the cytoplasm. It carries out the reaction heme b + 2 H(+) = protoporphyrin IX + Fe(2+). Its pathway is porphyrin-containing compound metabolism; protoheme biosynthesis; protoheme from protoporphyrin-IX: step 1/1. Functionally, catalyzes the ferrous insertion into protoporphyrin IX. The chain is Ferrochelatase from Stutzerimonas stutzeri (strain A1501) (Pseudomonas stutzeri).